We begin with the raw amino-acid sequence, 465 residues long: uncharacterized protein (465 aa).

A helical membrane pass occupies residues 56-76; that stretch reads ILYMIIFAIFGLLPFLIALIF. Residues 177-198 are disordered; it reads KFNKSKKSNKINDKTPILNNNN. The helical transmembrane segment at 273–293 threads the bilayer; sequence LIFLLVSTILLIALIGFILII. Residues 411-449 form a disordered region; sequence NNYNNSNNNNNSNNSNSNNNNNNNNNNNNYNNNNYNNNN.

It is found in the membrane. This is an uncharacterized protein from Dictyostelium discoideum (Social amoeba).